The primary structure comprises 549 residues: Glucose-6-phosphate isomerase (549 aa).

Glutamate 355 functions as the Proton donor in the catalytic mechanism. Active-site residues include histidine 387 and lysine 515.

The protein belongs to the GPI family.

The protein resides in the cytoplasm. The catalysed reaction is alpha-D-glucose 6-phosphate = beta-D-fructose 6-phosphate. Its pathway is carbohydrate biosynthesis; gluconeogenesis. It participates in carbohydrate degradation; glycolysis; D-glyceraldehyde 3-phosphate and glycerone phosphate from D-glucose: step 2/4. In terms of biological role, catalyzes the reversible isomerization of glucose-6-phosphate to fructose-6-phosphate. In Mannheimia succiniciproducens (strain KCTC 0769BP / MBEL55E), this protein is Glucose-6-phosphate isomerase.